The sequence spans 452 residues: tRNA modification GTPase MnmE (452 aa).

Positions 23, 81, and 120 each coordinate (6S)-5-formyl-5,6,7,8-tetrahydrofolate. A TrmE-type G domain is found at 217–373 (GIKTAIIGQT…LVLRINQMYL (157 aa)). N227 contributes to the K(+) binding site. GTP contacts are provided by residues 227-232 (NVGKSS), 246-252 (TDIPGTT), and 271-274 (DTAG). Mg(2+) is bound at residue S231. Residues T246, I248, and T251 each contribute to the K(+) site. T252 is a binding site for Mg(2+). Position 452 (K452) interacts with (6S)-5-formyl-5,6,7,8-tetrahydrofolate.

It belongs to the TRAFAC class TrmE-Era-EngA-EngB-Septin-like GTPase superfamily. TrmE GTPase family. Homodimer. Heterotetramer of two MnmE and two MnmG subunits. K(+) serves as cofactor.

The protein resides in the cytoplasm. Its function is as follows. Exhibits a very high intrinsic GTPase hydrolysis rate. Involved in the addition of a carboxymethylaminomethyl (cmnm) group at the wobble position (U34) of certain tRNAs, forming tRNA-cmnm(5)s(2)U34. This Mycoplasma mycoides subsp. mycoides SC (strain CCUG 32753 / NCTC 10114 / PG1) protein is tRNA modification GTPase MnmE.